The sequence spans 154 residues: Transcriptional repressor NrdR (154 aa).

A zinc finger lies at 3–34; it reads CPFCGHAATQVIDTRMSEEGDTVRRRRRCESC. Residues 49 to 139 form the ATP-cone domain; sequence PAVVKKNGSR…VYRSFEDLAE (91 aa).

Belongs to the NrdR family. Zn(2+) is required as a cofactor.

Functionally, negatively regulates transcription of bacterial ribonucleotide reductase nrd genes and operons by binding to NrdR-boxes. This is Transcriptional repressor NrdR from Ralstonia pickettii (strain 12J).